The sequence spans 360 residues: DNA replication and repair protein RecF (360 aa).

30 to 37 (GDNAQGKT) lines the ATP pocket.

This sequence belongs to the RecF family.

The protein resides in the cytoplasm. In terms of biological role, the RecF protein is involved in DNA metabolism; it is required for DNA replication and normal SOS inducibility. RecF binds preferentially to single-stranded, linear DNA. It also seems to bind ATP. This is DNA replication and repair protein RecF from Lachnoclostridium phytofermentans (strain ATCC 700394 / DSM 18823 / ISDg) (Clostridium phytofermentans).